Consider the following 133-residue polypeptide: Small ribosomal subunit protein eS8 (133 aa).

The segment at 1–31 (MGFYQGPDNRKITGGLKGKHRDKRKYEIGNP) is disordered.

This sequence belongs to the eukaryotic ribosomal protein eS8 family. In terms of assembly, part of the 30S ribosomal subunit.

This chain is Small ribosomal subunit protein eS8, found in Saccharolobus solfataricus (strain ATCC 35092 / DSM 1617 / JCM 11322 / P2) (Sulfolobus solfataricus).